The chain runs to 396 residues: S-adenosylmethionine synthase (396 aa).

His16 is a binding site for ATP. Position 18 (Asp18) interacts with Mg(2+). Glu44 is a binding site for K(+). L-methionine-binding residues include Glu57 and Gln100. A flexible loop region spans residues 100 to 110; the sequence is QSPDINQGVDR. ATP is bound by residues 165 to 167, Asp240, 246 to 247, Ala263, and Lys267; these read DAK and RK. Asp240 is a binding site for L-methionine. Residue Lys271 participates in L-methionine binding.

It belongs to the AdoMet synthase family. In terms of assembly, homotetramer; dimer of dimers. Requires Mg(2+) as cofactor. The cofactor is K(+).

The protein resides in the cytoplasm. The catalysed reaction is L-methionine + ATP + H2O = S-adenosyl-L-methionine + phosphate + diphosphate. It functions in the pathway amino-acid biosynthesis; S-adenosyl-L-methionine biosynthesis; S-adenosyl-L-methionine from L-methionine: step 1/1. Its function is as follows. Catalyzes the formation of S-adenosylmethionine (AdoMet) from methionine and ATP. The overall synthetic reaction is composed of two sequential steps, AdoMet formation and the subsequent tripolyphosphate hydrolysis which occurs prior to release of AdoMet from the enzyme. The polypeptide is S-adenosylmethionine synthase (Pseudomonas fluorescens (strain SBW25)).